The sequence spans 181 residues: Large ribosomal subunit protein uL10 (181 aa).

It belongs to the universal ribosomal protein uL10 family. Part of the ribosomal stalk of the 50S ribosomal subunit. The N-terminus interacts with L11 and the large rRNA to form the base of the stalk. The C-terminus forms an elongated spine to which L12 dimers bind in a sequential fashion forming a multimeric L10(L12)X complex.

Its function is as follows. Forms part of the ribosomal stalk, playing a central role in the interaction of the ribosome with GTP-bound translation factors. The protein is Large ribosomal subunit protein uL10 of Protochlamydia amoebophila (strain UWE25).